The chain runs to 234 residues: Enterobactin synthase component D (234 aa).

Mg(2+)-binding residues include Asp107, Glu109, and Glu152.

This sequence belongs to the P-Pant transferase superfamily. EntD family. EntB, EntD, EntE, and EntF form a multienzyme complex called enterobactin synthase. Mg(2+) is required as a cofactor.

The protein resides in the membrane. It catalyses the reaction apo-[aryl-carrier protein] + CoA = holo-[aryl-carrier protein] + adenosine 3',5'-bisphosphate + H(+). The catalysed reaction is apo-[peptidyl-carrier protein] + CoA = holo-[peptidyl-carrier protein] + adenosine 3',5'-bisphosphate + H(+). It functions in the pathway siderophore biosynthesis; enterobactin biosynthesis. Involved in the biosynthesis of the siderophore enterobactin (enterochelin), which is a macrocyclic trimeric lactone of N-(2,3-dihydroxybenzoyl)-serine. The serine trilactone serves as a scaffolding for the three catechol functionalities that provide hexadentate coordination for the tightly ligated iron(2+) atoms. Plays an essential role in the assembly of the enterobactin by catalyzing the transfer of the 4'-phosphopantetheine (Ppant) moiety from coenzyme A to the apo-domains of both EntB (ArCP domain) and EntF (PCP domain) to yield their holo-forms which make them competent for the activation of 2,3-dihydroxybenzoate (DHB) and L-serine, respectively. This is Enterobactin synthase component D from Salmonella typhimurium (strain LT2 / SGSC1412 / ATCC 700720).